Consider the following 363-residue polypeptide: Peptide chain release factor 1 (363 aa).

Gln237 bears the N5-methylglutamine mark. The interval 281 to 302 (QQAEDEKSHAEEQTIRRSLVAS) is disordered. Basic and acidic residues predominate over residues 282 to 295 (QAEDEKSHAEEQTI).

This sequence belongs to the prokaryotic/mitochondrial release factor family. In terms of processing, methylated by PrmC. Methylation increases the termination efficiency of RF1.

Its subcellular location is the cytoplasm. In terms of biological role, peptide chain release factor 1 directs the termination of translation in response to the peptide chain termination codons UAG and UAA. The sequence is that of Peptide chain release factor 1 from Psychromonas ingrahamii (strain DSM 17664 / CCUG 51855 / 37).